The primary structure comprises 299 residues: GTPase Era (299 aa).

The Era-type G domain occupies 5 to 172 (KSGFVSIIGR…IDVLKSFLPE (168 aa)). Residues 13 to 20 (GRPNVGKS) are G1. 13 to 20 (GRPNVGKS) contacts GTP. The tract at residues 39–43 (QTTRN) is G2. A G3 region spans residues 60-63 (DTPG). GTP-binding positions include 60 to 64 (DTPGI) and 122 to 125 (NKID). Residues 122–125 (NKID) are G4. The segment at 151–153 (ISA) is G5. Residues 203–280 (TSEEIPHAIG…YLELWVKVQR (78 aa)) enclose the KH type-2 domain.

It belongs to the TRAFAC class TrmE-Era-EngA-EngB-Septin-like GTPase superfamily. Era GTPase family. As to quaternary structure, monomer.

It is found in the cytoplasm. The protein resides in the cell membrane. An essential GTPase that binds both GDP and GTP, with rapid nucleotide exchange. Plays a role in 16S rRNA processing and 30S ribosomal subunit biogenesis and possibly also in cell cycle regulation and energy metabolism. The protein is GTPase Era of Staphylococcus epidermidis (strain ATCC 35984 / DSM 28319 / BCRC 17069 / CCUG 31568 / BM 3577 / RP62A).